Here is a 562-residue protein sequence, read N- to C-terminus: NAD-dependent malic enzyme (562 aa).

The active-site Proton donor is the Y101. R154 is an NAD(+) binding site. Residue K172 is the Proton acceptor of the active site. E243, D244, and D267 together coordinate a divalent metal cation. Residues D267 and N415 each coordinate NAD(+).

The protein belongs to the malic enzymes family. In terms of assembly, homotetramer. The cofactor is Mg(2+). It depends on Mn(2+) as a cofactor.

The catalysed reaction is (S)-malate + NAD(+) = pyruvate + CO2 + NADH. It catalyses the reaction oxaloacetate + H(+) = pyruvate + CO2. The polypeptide is NAD-dependent malic enzyme (Aliivibrio fischeri (strain MJ11) (Vibrio fischeri)).